A 2527-amino-acid chain; its full sequence is Leucine-rich repeat serine/threonine-protein kinase 2 (2527 aa).

The interval 1–969 (MASGACQGCE…RSSRLPSHMR (969 aa)) is required for RAB29-mediated activation. Residues 9-33 (CEEEEEEEALKKLIVRLNNVQEGKQ) are a coiled coil. Phosphoserine occurs at positions 910, 935, 955, and 973. The disordered stretch occupies residues 957-979 (ESLRSSRLPSHMRQSDSSSSLAS). Residues 961–978 (SSRLPSHMRQSDSSSSLA) show a composition bias toward low complexity. LRR repeat units follow at residues 983–1004 (HITS…SQKC), 1012–1033 (HLTK…LCET), 1036–1057 (CLIH…VLKM), 1059–1080 (RITN…DPAM), 1084–1105 (SLKQ…LAQV), 1108–1129 (KLEQ…LSLK), 1130–1150 (ELKI…DFLE), 1156–1171 (ESFS…MPAL), 1174–1196 (SITS…FSLP), 1197–1218 (HLRS…AHWK), 1221–1245 (NLRE…HVWS), 1246–1267 (RVEK…IGCL), and 1269–1291 (NLTS…MGKL). S1292 bears the Phosphoserine; by autocatalysis mark. One can recognise a Roc domain in the interval 1328–1511 (KAVPYNRMKL…KTIINESLNF (184 aa)). Position 1341–1348 (1341–1348 (GNTGSGKT)) interacts with GTP. Residue S1444 is modified to Phosphoserine. The region spanning 1543–1740 (TEFPVINRKH…RMYWRQGIYL (198 aa)) is the COR domain. Residues 1879-2146 (EAPEFLLGDG…LICLMRHILI (268 aa)) form the Protein kinase domain. ATP-binding residues include L1885, D1887, G1888, G1891, V1893, A1904, K1906, M1947, E1948, A1950, S1954, and R1957. Residue D1994 is the Proton acceptor of the active site. Residues H1998, L2001, A2016, and D2017 each coordinate ATP. GTP is bound at residue 2098-2121 (EYGCAPWPMVEKLITKCLKENPQE). WD repeat units lie at residues 2139 to 2183 (CLMR…SLFD), 2188 to 2228 (RYSY…LVIN), 2233 to 2276 (TKRH…MIFE), 2281 to 2327 (KCKG…FSFS), 2333 to 2377 (QKLI…EVWD), 2402 to 2438 (KESK…LLLD), and 2443 to 2497 (RVIR…SIWD). 2295–2298 (DVST) is a binding site for GTP.

Belongs to the protein kinase superfamily. TKL Ser/Thr protein kinase family. In terms of assembly, homodimer. Homotetramer; when activated by GTP-bound RAB29. Interacts with PRKN, PRDX3 and TPCN2. Interacts with VPS35. Interacts (via N-terminus) with RAB29; this interaction is direct and stimulates kinase activity. Interacts (via ROC domain) with SEC16A. Interacts with APP; interaction promotes phosphorylation of 'Thr-743' of APP. Interacts with MAPT. Interacts with RAB8A, RAB10, and RAB12. Interacts (via N-terminus) with RAB32. Interacts with YWHAG; this interaction is dependent on phosphorylation of Ser-910 and either Ser-935 or Ser-1444. Interacts with SFN; this interaction is dependent on phosphorylation of Ser-910 and/or Ser-935. Mg(2+) is required as a cofactor. Post-translationally, autophosphorylated at Ser-1292. Autophosphorylation is stimulated by RAB29. Phosphorylation of Ser-910 and Ser-935 or Ser-1444 facilitates interaction with YWHAG. Phosphorylation of Ser-910 and/or Ser-935 facilitates interaction with SFN. Ubiquitinated by TRIM1; undergoes 'Lys-48'-linked polyubiquitination leading to proteasomal degradation. Expressed in the brain (at protein level). Detected throughout the adult brain. Expressed in deep cerebral cortex layers, superficial cingulate cortex layers, the piriform cortex, hippocampal formation, caudate putamen, substantia nigra, the basolateral and basomedial anterior amygdala nuclei, reticular thalamic nucleus and also in the cerebellar granular cell layer. Highly expressed in the striatum, cortex and olfactory tubercle. Little or no expression in the substantia nigra, where dopaminergic neurons preferentially degenerate in Parkinson disease. Expression is particularly high in brain dopaminoceptive areas. High and strikingly specific expression in striatum and parts of cortex and no signals in dopamine neurons.

The protein localises to the cytoplasmic vesicle. Its subcellular location is the perikaryon. The protein resides in the cell projection. It is found in the axon. It localises to the dendrite. The protein localises to the golgi apparatus membrane. Its subcellular location is the endoplasmic reticulum membrane. The protein resides in the secretory vesicle. It is found in the synaptic vesicle membrane. It localises to the endosome. The protein localises to the lysosome. Its subcellular location is the mitochondrion outer membrane. The protein resides in the cytoplasm. It is found in the cytoskeleton. It localises to the phagosome. It carries out the reaction L-threonyl-[protein] + ATP = O-phospho-L-threonyl-[protein] + ADP + H(+). The enzyme catalyses L-seryl-[protein] + ATP = O-phospho-L-seryl-[protein] + ADP + H(+). It catalyses the reaction GTP + H2O = GDP + phosphate + H(+). Its activity is regulated as follows. Kinase activity is regulated by the GTPase activity of the ROC domain. GTP-bound LRRK2 kinase activity is stimulated by RAB29. Phosphorylation of RAB10 'Thr-73' is stimulated by RAB29 and RAB32. Inhibited by small molecule inhibitors MLi-2 and LRRK2-IN-1. In terms of biological role, serine/threonine-protein kinase which phosphorylates a broad range of proteins involved in multiple processes such as neuronal plasticity, innate immunity, autophagy, and vesicle trafficking. Is a key regulator of RAB GTPases by regulating the GTP/GDP exchange and interaction partners of RABs through phosphorylation. Phosphorylates RAB3A, RAB3B, RAB3C, RAB3D, RAB8A, RAB8B, RAB10, RAB12, RAB29, RAB35, and RAB43. Regulates the RAB3IP-catalyzed GDP/GTP exchange for RAB8A through the phosphorylation of 'Thr-72' on RAB8A. Inhibits the interaction between RAB8A and GDI1 and/or GDI2 by phosphorylating 'Thr-72' on RAB8A. Regulates primary ciliogenesis through phosphorylation of RAB8A and RAB10, which promotes SHH signaling in the brain. Together with RAB29, plays a role in the retrograde trafficking pathway for recycling proteins, such as mannose-6-phosphate receptor (M6PR), between lysosomes and the Golgi apparatus in a retromer-dependent manner. Regulates neuronal process morphology in the intact central nervous system (CNS). Plays an important role in recruiting SEC16A to endoplasmic reticulum exit sites (ERES) and in regulating ER to Golgi vesicle-mediated transport and ERES organization. Positively regulates autophagy through a calcium-dependent activation of the CaMKK/AMPK signaling pathway. The process involves activation of nicotinic acid adenine dinucleotide phosphate (NAADP) receptors, increase in lysosomal pH, and calcium release from lysosomes. Phosphorylates PRDX3. By phosphorylating APP on 'Thr-743', which promotes the production and the nuclear translocation of the APP intracellular domain (AICD), regulates dopaminergic neuron apoptosis. Acts as a positive regulator of innate immunity by mediating phosphorylation of RIPK2 downstream of NOD1 and NOD2, thereby enhancing RIPK2 activation. Independent of its kinase activity, inhibits the proteasomal degradation of MAPT, thus promoting MAPT oligomerization and secretion. In addition, has GTPase activity via its Roc domain which regulates LRKK2 kinase activity. Recruited by RAB29/RAB7L1 to overloaded lysosomes where it phosphorylates and stabilizes RAB8A and RAB10 which promote lysosomal content release and suppress lysosomal enlargement through the EHBP1 and EHBP1L1 effector proteins. The chain is Leucine-rich repeat serine/threonine-protein kinase 2 (Lrrk2) from Mus musculus (Mouse).